The sequence spans 259 residues: Alpha-acetolactate decarboxylase (259 aa).

This sequence belongs to the alpha-acetolactate decarboxylase family.

It catalyses the reaction (2S)-2-acetolactate + H(+) = (R)-acetoin + CO2. Its pathway is polyol metabolism; (R,R)-butane-2,3-diol biosynthesis; (R,R)-butane-2,3-diol from pyruvate: step 2/3. Converts acetolactate into acetoin, which can be excreted by the cells. This may be a mechanism for controlling the internal pH of cells in the stationary stage. This Raoultella terrigena (Klebsiella terrigena) protein is Alpha-acetolactate decarboxylase (budA).